The chain runs to 339 residues: Protein-glutamate methylesterase/protein-glutamine glutaminase 3 (339 aa).

The Response regulatory domain occupies asparagine 2–alanine 119. 4-aspartylphosphate is present on aspartate 53. A CheB-type methylesterase domain is found at proline 141 to threonine 336. Active-site residues include serine 158, histidine 185, and aspartate 278.

The protein belongs to the CheB family. In terms of processing, phosphorylated by CheA. Phosphorylation of the N-terminal regulatory domain activates the methylesterase activity.

Its subcellular location is the cytoplasm. The catalysed reaction is [protein]-L-glutamate 5-O-methyl ester + H2O = L-glutamyl-[protein] + methanol + H(+). The enzyme catalyses L-glutaminyl-[protein] + H2O = L-glutamyl-[protein] + NH4(+). Its function is as follows. Involved in chemotaxis. Part of a chemotaxis signal transduction system that modulates chemotaxis in response to various stimuli. Catalyzes the demethylation of specific methylglutamate residues introduced into the chemoreceptors (methyl-accepting chemotaxis proteins or MCP) by CheR. Also mediates the irreversible deamidation of specific glutamine residues to glutamic acid. In Burkholderia orbicola (strain AU 1054), this protein is Protein-glutamate methylesterase/protein-glutamine glutaminase 3.